The chain runs to 318 residues: 5'-3' exonuclease (318 aa).

The 85-residue stretch at 194–278 (AYAELALLRG…ATDAPVTLST (85 aa)) folds into the 5'-3' exonuclease domain.

5'-3' exonuclease acting preferentially on double-stranded DNA. The sequence is that of 5'-3' exonuclease from Mycobacterium tuberculosis (strain ATCC 25618 / H37Rv).